The primary structure comprises 416 residues: Tyrosine--tRNA ligase (416 aa).

Tyr37 is an L-tyrosine binding site. Positions 42-51 (PTADSLHVGN) match the 'HIGH' region motif. The L-tyrosine site is built by Tyr176 and Gln180. Positions 236–240 (KMGKS) match the 'KMSKS' region motif. Lys239 provides a ligand contact to ATP. Residues 350–416 (LPAFRVFQEA…KKKHILLRPV (67 aa)) form the S4 RNA-binding domain.

Belongs to the class-I aminoacyl-tRNA synthetase family. TyrS type 1 subfamily. As to quaternary structure, homodimer.

The protein localises to the cytoplasm. It carries out the reaction tRNA(Tyr) + L-tyrosine + ATP = L-tyrosyl-tRNA(Tyr) + AMP + diphosphate + H(+). Catalyzes the attachment of tyrosine to tRNA(Tyr) in a two-step reaction: tyrosine is first activated by ATP to form Tyr-AMP and then transferred to the acceptor end of tRNA(Tyr). The protein is Tyrosine--tRNA ligase of Gluconobacter oxydans (strain 621H) (Gluconobacter suboxydans).